A 447-amino-acid chain; its full sequence is FAD-dependent monooxygenase tropB (447 aa).

A helical transmembrane segment spans residues 12–32; the sequence is PLSVGIVGGGIIGVILAAGLV. Glutamate 42, alanine 55, and arginine 124 together coordinate FAD. Asparagine 153 carries N-linked (GlcNAc...) asparagine glycosylation. Active-site residues include arginine 206 and tyrosine 239. N-linked (GlcNAc...) asparagine glycosylation is present at asparagine 243. Residues aspartate 322 and alanine 335 each contribute to the FAD site.

It belongs to the paxM FAD-dependent monooxygenase family. FAD serves as cofactor.

The protein resides in the membrane. It functions in the pathway secondary metabolite biosynthesis. FAD-dependent monooxygenase; part of the gene cluster that mediates the biosynthesis of the tropolone class of fungal maleic anhydrides. Within the pathway, tropB catalyzes a synthetically challenging asymmetric oxidative dearomatization reaction to convert 3-methylorcinaldehyde into a hydroxycyclohexadione. The pathway begins with the synthesis of 3-methylorcinaldehyde by the non-reducing polyketide synthase (PKS) tropA. 3-methylorcinaldehyde is the substrate for the FAD-dependent monooxygenase tropB to yield a dearomatized hydroxycyclohexadione. The 2-oxoglutarate-dependent dioxygenase tropC then performs the oxidative ring expansion to provide the first tropolone metabolite stipitaldehyde. Trop D converts stipitaldehyde into stipitacetal which is in turn converted to stipitalide by the short-chain dehydrogenase/reductase tropE. The next steps involve tropF, tropG, tropH, tropI and tropJ to form successive tropolone maleic anhydrides including stipitaldehydic, stipitatonic and stipitatic acids. This Talaromyces stipitatus (strain ATCC 10500 / CBS 375.48 / QM 6759 / NRRL 1006) (Penicillium stipitatum) protein is FAD-dependent monooxygenase tropB.